Here is a 311-residue protein sequence, read N- to C-terminus: Glutaminase (311 aa).

Substrate contacts are provided by serine 66, asparagine 116, glutamate 162, asparagine 169, tyrosine 193, tyrosine 245, and valine 263.

Belongs to the glutaminase family. Homotetramer.

The catalysed reaction is L-glutamine + H2O = L-glutamate + NH4(+). This chain is Glutaminase, found in Rhodopseudomonas palustris (strain HaA2).